The chain runs to 561 residues: Laccase-1 (561 aa).

An N-terminal signal peptide occupies residues 1-20 (MKNSFFSSLAKFASLSLAFA). Plastocyanin-like domains lie at 68–185 (VVQN…GPAT) and 191–337 (DLGM…YTGS). N-linked (GlcNAc...) asparagine glycosylation is found at Asn71, Asn87, and Asn114. Residues His119, His121, His163, and His165 each contribute to the Cu cation site. Cysteines 140 and 542 form a disulfide. N-linked (GlcNAc...) asparagine glycans are attached at residues Asn226, Asn284, Asn327, Asn391, and Asn398. The Plastocyanin-like 3 domain maps to 396–525 (LLNWTDPTLL…ALQFVESESS (130 aa)). The Cu cation site is built by His445, His448, His450, His504, Cys505, His506, and His510.

It belongs to the multicopper oxidase family. Cu cation is required as a cofactor.

It localises to the secreted. The enzyme catalyses 4 hydroquinone + O2 = 4 benzosemiquinone + 2 H2O. Functionally, lignin degradation and detoxification of lignin-derived products. This is Laccase-1 (lcc1) from Botryotinia fuckeliana (Noble rot fungus).